The sequence spans 473 residues: Vasculin (473 aa).

Disordered regions lie at residues 1–25, 46–149, and 191–342; these read MAQH…SSLN, RHNS…REPN, and VGNL…QERD. The residue at position 49 (serine 49) is a Phosphoserine. At arginine 87 the chain carries Omega-N-methylarginine. A compositionally biased stretch (basic and acidic residues) spans 119 to 133; the sequence is ETGRKEDKRERKQFE. 2 stretches are compositionally biased toward polar residues: residues 194-204 and 251-286; these read LPSQPVKNGTG and AFKS…QQPR. Phosphoserine occurs at positions 274, 276, 322, and 381. The span at 293-329 shows a compositional bias: basic and acidic residues; that stretch reads MRTDKKSEFLKALKRDRVEEEHEDESRAGSEKDDDSF. The tract at residues 444–473 is disordered; it reads GPWKNSTFKPTTENDDTETSSSDTSDDDDV. Over residues 456 to 473 the composition is skewed to acidic residues; the sequence is ENDDTETSSSDTSDDDDV.

It belongs to the vasculin family. Interacts with GTF2B, GTF2F2, RNA polymerase II and TBP. In terms of tissue distribution, widely expressed. Some isoforms may be specifically expressed in veins and arteries (at protein level). Isoform 4 is widely expressed. Isoform 1, isoform 2 and isoform 3 may be specifically expressed in vascular smooth muscle cells.

The protein resides in the nucleus. It is found in the cytoplasm. Functionally, functions as a GC-rich promoter-specific transactivating transcription factor. This Homo sapiens (Human) protein is Vasculin (GPBP1).